A 91-amino-acid chain; its full sequence is Large ribosomal subunit protein bL27 (91 aa).

It belongs to the bacterial ribosomal protein bL27 family. In terms of assembly, part of the 50S ribosomal subunit. Contacts protein L18.

Functionally, binds the 5S and 23S rRNAs and also the tRNA in the P site. The polypeptide is Large ribosomal subunit protein bL27 (rpmA) (Deinococcus radiodurans (strain ATCC 13939 / DSM 20539 / JCM 16871 / CCUG 27074 / LMG 4051 / NBRC 15346 / NCIMB 9279 / VKM B-1422 / R1)).